Reading from the N-terminus, the 235-residue chain is Proteasome subunit alpha (235 aa).

The protein belongs to the peptidase T1A family. The 20S proteasome core is composed of 14 alpha and 14 beta subunits that assemble into four stacked heptameric rings, resulting in a barrel-shaped structure. The two inner rings, each composed of seven catalytic beta subunits, are sandwiched by two outer rings, each composed of seven alpha subunits. The catalytic chamber with the active sites is on the inside of the barrel. Has a gated structure, the ends of the cylinder being occluded by the N-termini of the alpha-subunits. Is capped by the proteasome-associated ATPase, ARC.

It is found in the cytoplasm. It participates in protein degradation; proteasomal Pup-dependent pathway. The formation of the proteasomal ATPase ARC-20S proteasome complex, likely via the docking of the C-termini of ARC into the intersubunit pockets in the alpha-rings, may trigger opening of the gate for substrate entry. Interconversion between the open-gate and close-gate conformations leads to a dynamic regulation of the 20S proteasome proteolysis activity. Its function is as follows. Component of the proteasome core, a large protease complex with broad specificity involved in protein degradation. This chain is Proteasome subunit alpha, found in Arthrobacter sp. (strain FB24).